The primary structure comprises 527 residues: Estrogen receptor beta (527 aa).

Positions 1–145 are modulating; it reads MDVKNSPSSL…SPSSKRDAHF (145 aa). Ser-84 and Ser-102 each carry phosphoserine; by MAPK. NR C4-type zinc fingers lie at residues 146–166 and 182–206; these read CAVC…CEGC and CPAT…LRKC. The segment at residues 146 to 211 is a DNA-binding region (nuclear receptor); sequence CAVCSDYASG…RLRKCYEVGM (66 aa). Positions 261–495 constitute an NR LBD domain; the sequence is SPEQLVLTLL…DLLLEMLNAH (235 aa). Residues 505–527 are disordered; it reads TRSERNLAEDSESKEGSQKPQAQ. The segment covering 506-521 has biased composition (basic and acidic residues); that stretch reads RSERNLAEDSESKEGS.

It belongs to the nuclear hormone receptor family. NR3 subfamily. As to quaternary structure, binds DNA as a homodimer. Can form a heterodimer with ESR1. Interacts with NCOA1, NCOA3, NCOA5 and NCOA6 coactivators, leading to a strong increase of transcription of target genes. Interacts with UBE1C and AKAP13. Interacts with DNTTIP2. Interacts with CCDC62 in the presence of estradiol/E2; this interaction seems to enhance the transcription of target genes. Interacts with DNAAF4. Interacts with PRMT2. Interacts with CCAR2 (via N-terminus) in a ligand-independent manner. Interacts with RBM39, in the presence of estradiol (E2). Interacts with STUB1/CHIP. Phosphorylation at Ser-84 and Ser-102 recruits NCOA1.

The protein localises to the nucleus. In terms of biological role, nuclear hormone receptor. Binds estrogens with an affinity similar to that of ESR1/ER-alpha, and activates expression of reporter genes containing estrogen response elements (ERE) in an estrogen-dependent manner. The sequence is that of Estrogen receptor beta (ESR2) from Ovis aries (Sheep).